The sequence spans 146 residues: Large ribosomal subunit protein uL15 (146 aa).

Positions 1–51 (MKLHELQPAPGSRKERNRVGRGIGSGNGKTSGKGHKGQNARSGGGVRIGFE) are disordered. Composition is skewed to gly residues over residues 21–31 (RGIGSGNGKTS) and 42–51 (SGGGVRIGFE).

This sequence belongs to the universal ribosomal protein uL15 family. In terms of assembly, part of the 50S ribosomal subunit.

Binds to the 23S rRNA. In Anoxybacillus flavithermus (strain DSM 21510 / WK1), this protein is Large ribosomal subunit protein uL15.